Consider the following 375-residue polypeptide: Geranylgeranyl transferase type-1 subunit beta (375 aa).

A disordered region spans residues 1–33 (MSETAVSIDSDRSKSEEEDEEEYSPPVQSSPSA). Serine 2 carries the N-acetylserine modification. PFTB repeat units follow at residues 157–199 (SKSL…YMLD), 206–247 (KESA…RLMG), 265–306 (PSLL…KLIG), and 313–354 (KMAL…SLLE). Residues 232-234 (HGG) and 285-288 (RTNK) each bind geranylgeranyl diphosphate. Zn(2+) is bound by residues aspartate 291 and cysteine 293. 294-297 (YAFW) contacts geranylgeranyl diphosphate. A Zn(2+)-binding site is contributed by histidine 342.

It belongs to the protein prenyltransferase subunit beta family. Heterodimer of an alpha and a beta subunit. Zn(2+) serves as cofactor. Requires Mg(2+) as cofactor. Expressed in roots, leaves, stems, flowers and siliques.

The enzyme catalyses geranylgeranyl diphosphate + L-cysteinyl-[protein] = S-geranylgeranyl-L-cysteinyl-[protein] + diphosphate. Its function is as follows. Catalyzes the transfer of a geranyl-geranyl moiety from geranyl-geranyl pyrophosphate to a cysteine at the fourth position from the C-terminus of proteins having the C-terminal sequence Cys-aliphatic-aliphatic-X (CaaX). Seems to exclusively prenylate CaaX substrates with leucine in the terminal position. The beta subunit is responsible for peptide-binding. May negatively regulate abscisic acid (ABA) signaling in guard cells and auxin-induced lateral root initiation. Negatively regulates ABA signaling in guard cells. in negative regulation of auxin-induced lateral root initiation. The protein is Geranylgeranyl transferase type-1 subunit beta (GGB) of Arabidopsis thaliana (Mouse-ear cress).